Consider the following 425-residue polypeptide: Putative E3 ubiquitin-protein ligase UBR7 (425 aa).

The UBR-type zinc-finger motif lies at 44 to 116; it reads EKCSYSQGSV…KNLECKLLPD (73 aa). The PHD-type; atypical zinc-finger motif lies at 132–188; the sequence is GLYCICKRPYPDPEDEIPDEMIQCVVCEDWFHGRHLGAIPPESGDFQEMVCQACMKR. Glycyl lysine isopeptide (Lys-Gly) (interchain with G-Cter in SUMO2) cross-links involve residues lysine 225 and lysine 252. Residues 225–246 form a disordered region; it reads KPENGEHQDSTLKEDVPEQGKD. Residue serine 264 is modified to Phosphoserine. Residue lysine 274 forms a Glycyl lysine isopeptide (Lys-Gly) (interchain with G-Cter in SUMO2) linkage. Phosphoserine is present on serine 354. Residue lysine 398 forms a Glycyl lysine isopeptide (Lys-Gly) (interchain with G-Cter in SUMO2) linkage.

In terms of tissue distribution, expressed in sperm (at protein level).

It carries out the reaction S-ubiquitinyl-[E2 ubiquitin-conjugating enzyme]-L-cysteine + [acceptor protein]-L-lysine = [E2 ubiquitin-conjugating enzyme]-L-cysteine + N(6)-ubiquitinyl-[acceptor protein]-L-lysine.. The protein operates within protein modification; protein ubiquitination. In terms of biological role, E3 ubiquitin-protein ligase which is a component of the N-end rule pathway. Recognizes and binds to proteins bearing specific N-terminal residues that are destabilizing according to the N-end rule, leading to their ubiquitination and subsequent degradation. The protein is Putative E3 ubiquitin-protein ligase UBR7 (UBR7) of Homo sapiens (Human).